Reading from the N-terminus, the 95-residue chain is RING finger protein Z (95 aa).

Residue Gly-2 is the site of N-myristoyl glycine; by host attachment. Residues 38–74 (CKSCWFANRGLIACSDHYLCLNCLTRLRSQSQFCGIC) form an RING-type; atypical zinc finger. The short motif at 88 to 91 (PSAP) is the PTAP/PSAP motif element.

It belongs to the arenaviridae Z protein family. In terms of assembly, interacts with protein NP; this interaction probably directs the encapsidated genome to budding sites. Interacts (via RING domain) with polymerase L; this interaction inhibits viral transcription and replication, Z partially blocks the product exit tunnel for the releasing nascent RNA product. Interacts with the glycoprotein complex; this interaction plays a role in virion budding. Interacts with host eIF4E; this interaction results in eIF4E reduced affinity for its substrate, the 5'-m7 G cap structure. Interacts (via late-budding domain) with host TSG101; this interaction is essential for budding and release of viral particles. Interacts with host RPLP0; this interaction may serve to load ribosome-like particles inside the virion. Interacts with host PML; this interaction induces PML bodies redistribution in the cytoplasm upon viral infection. Post-translationally, myristoylation is required for the role of RING finger protein Z in assembly and budding.

It is found in the virion. It localises to the host cytoplasm. Its subcellular location is the host perinuclear region. The protein resides in the host cell membrane. Functionally, plays a crucial role in virion assembly and budding. Expressed late in the virus life cycle, it acts as an inhibitor of viral transcription and RNA synthesis by interacting with the viral polymerase L. Presumably recruits the NP encapsidated genome to cellular membranes at budding sites via direct interaction with NP. Plays critical roles in the final steps of viral release by interacting with host TSG101, a member of the vacuolar protein-sorting pathway and using other cellular host proteins involved in vesicle formation pathway. The budding of the virus progeny occurs after association of protein Z with the viral glycoprotein complex SSP-GP1-GP2 at the cell periphery, step that requires myristoylation of protein Z. Also selectively represses protein production by associating with host eIF4E. In cell-based minigenome assay, has an inhibitory effect on the ribonucleoprotein machinery (vRNP), which is responsible for the replication and transcription of the viral genome. This Pirital mammarenavirus (isolate Rat/Venezuela/VAV-488/1995) (PIRV) protein is RING finger protein Z.